Reading from the N-terminus, the 163-residue chain is EF-hand calcium-binding domain-containing protein 11 (163 aa).

3 consecutive EF-hand domains span residues 18 to 53 (SEHR…LFGY), 91 to 126 (RYRN…VAPK), and 127 to 162 (LPER…GQKE). Asp-140, Asp-142, Asp-144, His-146, and Asp-151 together coordinate Ca(2+).

The chain is EF-hand calcium-binding domain-containing protein 11 (EFCAB11) from Homo sapiens (Human).